The sequence spans 152 residues: SsrA-binding protein (152 aa).

It belongs to the SmpB family.

The protein localises to the cytoplasm. Required for rescue of stalled ribosomes mediated by trans-translation. Binds to transfer-messenger RNA (tmRNA), required for stable association of tmRNA with ribosomes. tmRNA and SmpB together mimic tRNA shape, replacing the anticodon stem-loop with SmpB. tmRNA is encoded by the ssrA gene; the 2 termini fold to resemble tRNA(Ala) and it encodes a 'tag peptide', a short internal open reading frame. During trans-translation Ala-aminoacylated tmRNA acts like a tRNA, entering the A-site of stalled ribosomes, displacing the stalled mRNA. The ribosome then switches to translate the ORF on the tmRNA; the nascent peptide is terminated with the 'tag peptide' encoded by the tmRNA and targeted for degradation. The ribosome is freed to recommence translation, which seems to be the essential function of trans-translation. This chain is SsrA-binding protein, found in Rickettsia conorii (strain ATCC VR-613 / Malish 7).